The following is a 142-amino-acid chain: MFQGASSLALDTKGRLSVPTRHRDVLSATASSQLTITKHPHGCLMIFPRNEWEKFRERIASLPMQAQWWKRIFLGNAMDVDMDATGRVLVSPELRQAAGISKDAVLLGMGSYFELWDAATYAAQEAEQMKGEMPDVFRDFSF.

SpoVT-AbrB domains lie at 5-51 and 77-120; these read ASSL…PRNE and AMDV…DAAT.

This sequence belongs to the MraZ family. As to quaternary structure, forms oligomers.

Its subcellular location is the cytoplasm. The protein localises to the nucleoid. This is Transcriptional regulator MraZ from Polaromonas sp. (strain JS666 / ATCC BAA-500).